The sequence spans 507 residues: Glycosyltransferase family 92 protein C33H5.2 (507 aa).

Residues 6-26 (VILVFCASFALFFTFIIFGRY) form a helical membrane-spanning segment. In terms of domain architecture, GT92 spans 155–444 (RDVVMCIAPL…LKCYNEKFYD (290 aa)).

Belongs to the glycosyltransferase 92 family.

It is found in the membrane. The protein is Glycosyltransferase family 92 protein C33H5.2 of Caenorhabditis elegans.